We begin with the raw amino-acid sequence, 1007 residues long: A disintegrin and metalloproteinase with thrombospondin motifs 1 (1007 aa).

The signal sequence occupies residues 1 to 20 (MPCCLWAALSLLLAVVGAGA). N-linked (GlcNAc...) asparagine glycans are attached at residues Asn-130 and Asn-228. The 187-residue stretch at 184–370 (LWLELAIVAD…WSSCSKEQFH (187 aa)) folds into the Peptidase M12B domain. His-322 contributes to the Zn(2+) binding site. A Metal-binding motif is present at residues 322–333 (HELAHLLGLTHD). Glu-323 is an active-site residue. 2 residues coordinate Zn(2+): His-326 and His-332. 4 disulfide bridges follow: Cys-338–Cys-364, Cys-494–Cys-530, Cys-498–Cys-536, and Cys-509–Cys-520. The 56-residue stretch at 482–537 (TPEWGDWEEWSACNADCGYGLRTRTRKCKYRGFVSESACEGAGSQVATCWAGSSCA) folds into the TSP type-1 1 domain. Asn-561, Asn-610, Asn-626, Asn-737, Asn-777, and Asn-865 each carry an N-linked (GlcNAc...) asparagine glycan. 2 TSP type-1 domains span residues 833–899 (CEFV…NRIP) and 900–952 (CPVY…RRCP). Intrachain disulfides connect Cys-912/Cys-946, Cys-916/Cys-951, and Cys-927/Cys-935.

The cofactor is Zn(2+).

The protein localises to the secreted. Its subcellular location is the extracellular space. It localises to the extracellular matrix. In terms of biological role, involved in larval molting and metamorphosis. May degrade extracellular matrix (ECM) and basement membrane (BM) during the development of organs to allow degeneration and remodeling of tissues. This chain is A disintegrin and metalloproteinase with thrombospondin motifs 1, found in Bombyx mori (Silk moth).